The sequence spans 121 residues: Large ribosomal subunit protein bL20 (121 aa).

This sequence belongs to the bacterial ribosomal protein bL20 family.

Binds directly to 23S ribosomal RNA and is necessary for the in vitro assembly process of the 50S ribosomal subunit. It is not involved in the protein synthesizing functions of that subunit. In Polynucleobacter necessarius subsp. necessarius (strain STIR1), this protein is Large ribosomal subunit protein bL20.